A 725-amino-acid chain; its full sequence is MGALRWLSIAATASTALALNPEGLISAPRRSEAIPNPSGDVAVFSQSQYSFKTHKTTSQWNVLDLKSGDIKLLTNDSDVSEIVWLGSDDSTVLYVNGTNADIPGGVELWVSDISDFANGYKAASLPASFSGFKVVTTDSGDVRYVAYAESWANGTAYNEELVAKPLSSARIYDSIYVRHWDYYLTTRFNAVFSGTLKKSEGKGKATYKADGDLKNLVSPVKNAESPYPPFGGASDYDLSPDGKWVAFKSKAHDIPRANYTTAYIFLVPHDGSKTAVPINGPDSPGTPEGVKGDAGSPVFSPDSKKIAYWQMADESYEADHRTLYVYTVGSEETIPSLAADWDRSLDSVKWADDDNLIIGVEDAGRSRLFSIPADAGDDYKPKNFTDGGVVSAYYQLPDSTYLVTSTAIWTSWNVYIASPEKGVIKTLATANKIDPELKGLGPEIVDEFYYEGNWTKIQAFVIYPENFDKSKSYPLLYYIHGGPQSSWLDSWSTRWNPKVFADQGYVVVAPNPTGSSGFGDALQDAIQNQWGGYPYEDLVKGWEYVNENFDFIDTDNGVAAGASYGGFMINWIQGSDLGRKFKALVSHDGTFVADAKVSTEELWFMQHEFNGTFWDNRENYRRWDPSAPERILKFSTPMLIIHSDLDYRLPVSEGLSLFNILQERGVPSRFLNFPDENHWVQNKENSLVWHQQVLGWLNKYSGVEESNEDAVSLDNTVIPVVDYNP.

Residues 1-18 (MGALRWLSIAATASTALA) form the signal peptide. 6 N-linked (GlcNAc...) asparagine glycosylation sites follow: Asn-75, Asn-96, Asn-153, Asn-258, Asn-383, and Asn-453. Ser-563 (charge relay system) is an active-site residue. An N-linked (GlcNAc...) asparagine glycan is attached at Asn-610. Active-site charge relay system residues include Asp-646 and His-678.

This sequence belongs to the peptidase S9C family.

It is found in the secreted. The protein is Dipeptidyl-peptidase 5 of Aspergillus oryzae (strain ATCC 42149 / RIB 40) (Yellow koji mold).